Reading from the N-terminus, the 54-residue chain is uncharacterized protein (54 aa).

A signal peptide spans 1–21 (MNSKQILSLSAFAMTIATAAA). Residues 22 to 29 (GNWNAGDT) are Extracellular-facing. The chain crosses the membrane as a helical span at residues 30–50 (IALLIGIAMFFVLLLALLGWI). The Cytoplasmic portion of the chain corresponds to 51–54 (SRKK).

The protein localises to the membrane. This is an uncharacterized protein from Dictyostelium discoideum (Social amoeba).